A 101-amino-acid polypeptide reads, in one-letter code: Small ribosomal subunit protein uS14 (101 aa).

The tract at residues 51–70 is disordered; that stretch reads LPRDSSPSRQRNRCSQTGRP. Residues 52–68 show a composition bias toward polar residues; that stretch reads PRDSSPSRQRNRCSQTG.

Belongs to the universal ribosomal protein uS14 family. As to quaternary structure, part of the 30S ribosomal subunit. Contacts proteins S3 and S10.

Its function is as follows. Binds 16S rRNA, required for the assembly of 30S particles and may also be responsible for determining the conformation of the 16S rRNA at the A site. This chain is Small ribosomal subunit protein uS14, found in Mannheimia succiniciproducens (strain KCTC 0769BP / MBEL55E).